The chain runs to 147 residues: Ribonuclease P protein component (147 aa).

The disordered stretch occupies residues 117–147 (TRPRGQSSHRTRASREATSAHTTAVGEQPTQ).

Belongs to the RnpA family. As to quaternary structure, consists of a catalytic RNA component (M1 or rnpB) and a protein subunit.

The enzyme catalyses Endonucleolytic cleavage of RNA, removing 5'-extranucleotides from tRNA precursor.. RNaseP catalyzes the removal of the 5'-leader sequence from pre-tRNA to produce the mature 5'-terminus. It can also cleave other RNA substrates such as 4.5S RNA. The protein component plays an auxiliary but essential role in vivo by binding to the 5'-leader sequence and broadening the substrate specificity of the ribozyme. The polypeptide is Ribonuclease P protein component (Thermobifida fusca (strain YX)).